The sequence spans 340 residues: Coproporphyrin III ferrochelatase (340 aa).

Fe-coproporphyrin III contacts are provided by Ser-52 and Tyr-116. Residues His-172 and Glu-255 each contribute to the Fe(2+) site.

It belongs to the ferrochelatase family.

It is found in the cytoplasm. It carries out the reaction Fe-coproporphyrin III + 2 H(+) = coproporphyrin III + Fe(2+). Its pathway is porphyrin-containing compound metabolism; protoheme biosynthesis. In terms of biological role, involved in coproporphyrin-dependent heme b biosynthesis. Catalyzes the insertion of ferrous iron into coproporphyrin III to form Fe-coproporphyrin III. The chain is Coproporphyrin III ferrochelatase from Mycobacterium marinum (strain ATCC BAA-535 / M).